Reading from the N-terminus, the 65-residue chain is Keratin-associated protein 20-2 (65 aa).

Belongs to the KRTAP type 20 family. Interacts with hair keratins.

In the hair cortex, hair keratin intermediate filaments are embedded in an interfilamentous matrix, consisting of hair keratin-associated proteins (KRTAP), which are essential for the formation of a rigid and resistant hair shaft through their extensive disulfide bond cross-linking with abundant cysteine residues of hair keratins. The matrix proteins include the high-sulfur and high-glycine-tyrosine keratins. This chain is Keratin-associated protein 20-2 (KRTAP20-2), found in Homo sapiens (Human).